Reading from the N-terminus, the 296-residue chain is Sulfate adenylyltransferase subunit 2 (296 aa).

Belongs to the PAPS reductase family. CysD subfamily. Heterodimer composed of CysD, the smaller subunit, and CysN.

The enzyme catalyses sulfate + ATP + H(+) = adenosine 5'-phosphosulfate + diphosphate. It participates in sulfur metabolism; hydrogen sulfide biosynthesis; sulfite from sulfate: step 1/3. Functionally, with CysN forms the ATP sulfurylase (ATPS) that catalyzes the adenylation of sulfate producing adenosine 5'-phosphosulfate (APS) and diphosphate, the first enzymatic step in sulfur assimilation pathway. APS synthesis involves the formation of a high-energy phosphoric-sulfuric acid anhydride bond driven by GTP hydrolysis by CysN coupled to ATP hydrolysis by CysD. The polypeptide is Sulfate adenylyltransferase subunit 2 (Rhodospirillum rubrum (strain ATCC 11170 / ATH 1.1.1 / DSM 467 / LMG 4362 / NCIMB 8255 / S1)).